A 158-amino-acid polypeptide reads, in one-letter code: Cyclic pyranopterin monophosphate synthase (158 aa).

Substrate is bound by residues 76–78 and 114–115; these read LCH and ME. Asp-129 is a catalytic residue.

Belongs to the MoaC family. Homohexamer; trimer of dimers.

It carries out the reaction (8S)-3',8-cyclo-7,8-dihydroguanosine 5'-triphosphate = cyclic pyranopterin phosphate + diphosphate. The protein operates within cofactor biosynthesis; molybdopterin biosynthesis. In terms of biological role, catalyzes the conversion of (8S)-3',8-cyclo-7,8-dihydroguanosine 5'-triphosphate to cyclic pyranopterin monophosphate (cPMP). The sequence is that of Cyclic pyranopterin monophosphate synthase from Shewanella halifaxensis (strain HAW-EB4).